A 338-amino-acid chain; its full sequence is uncharacterized protein (338 aa).

The disordered stretch occupies residues 1–20 (MYNNNQNHHNNDNNMNKDEP). The span at 9-20 (HNNDNNMNKDEP) shows a compositional bias: basic and acidic residues. Asn-37, Asn-83, Asn-97, Asn-105, Asn-114, and Asn-122 each carry an N-linked (GlcNAc...) asparagine glycan. The tract at residues 55-92 (VNSGNNNNNNNNNNNNNNNNNNNNNNNNNDSIVINMDT) is disordered. Residues 59-92 (NNNNNNNNNNNNNNNNNNNNNNNNNDSIVINMDT) are compositionally biased toward low complexity. The next 3 helical transmembrane spans lie at 148 to 168 (YKKFISSLSYITFIGAAIVLI), 178 to 198 (FHAYQSFYISMGVIGFQFLLI), and 202 to 222 (ILSIILWSLYLLFTIFMFLKV). Residues Asn-229, Asn-240, Asn-286, Asn-302, Asn-317, and Asn-322 are each glycosylated (N-linked (GlcNAc...) asparagine). Disordered regions lie at residues 279–303 (SNLNRNNNNSNNVNNNGHQRINSNS) and 316–338 (LNSSGSNSSIYSDVQNDIGTNEE). Low complexity predominate over residues 280–294 (NLNRNNNNSNNVNNN). Over residues 316-327 (LNSSGSNSSIYS) the composition is skewed to low complexity. Residues 328–338 (DVQNDIGTNEE) are compositionally biased toward polar residues.

The protein resides in the membrane. This is an uncharacterized protein from Dictyostelium discoideum (Social amoeba).